The chain runs to 525 residues: Estrogen receptor (525 aa).

Residues 1–59 (PTSPLVFVPSSPRLSPFMHPPSHHYLETTSTPVYRSSVSSSQQQLSREDQCGTSDDSYS) are disordered. A modulating region spans residues 1–82 (PTSPLVFVPS…GFEMAKEMRF (82 aa)). The span at 36 to 45 (SSVSSSQQQL) shows a compositional bias: low complexity. 2 NR C4-type zinc fingers span residues 83–103 (CAVC…CEGC) and 119–143 (CPAT…LRKC). The nuclear receptor DNA-binding region spans 83 to 148 (CAVCSDYASG…RLRKCYQVGM (66 aa)). The hinge stretch occupies residues 149–209 (MKGGVRKDRG…GGGKSSIIGM (61 aa)). Basic and acidic residues predominate over residues 154–182 (RKDRGRVLRRDKRRTGTSDKASKDLEHRT). Residues 154–203 (RKDRGRVLRRDKRRTGTSDKASKDLEHRTAPPQDRRKHSSSSSSAGGGGK) form a disordered region. The region spanning 210-446 (SPDQVLLLLQ…DLLLEMLDAH (237 aa)) is the NR LBD domain. Over residues 452–465 (DRPAESWSQADREP) the composition is skewed to basic and acidic residues. Residues 452 to 525 (DRPAESWSQA…GPRSDCTHIL (74 aa)) are disordered. The segment covering 479 to 493 (SGGGDGGPSSAGSGS) has biased composition (gly residues).

The protein belongs to the nuclear hormone receptor family. NR3 subfamily. As to quaternary structure, binds DNA as a homodimer. Can form a heterodimer with ER-beta. In terms of tissue distribution, abundant in the liver, less abundant in the testes and barely detectable in the ovary and brain.

The protein resides in the nucleus. The steroid hormones and their receptors are involved in the regulation of eukaryotic gene expression and affect cellular proliferation and differentiation in target tissues. The chain is Estrogen receptor (esr1) from Micropogonias undulatus (Atlantic croaker).